The sequence spans 93 residues: Red pigment-concentrating hormone (93 aa).

The first 21 residues, 1–21, serve as a signal peptide directing secretion; that stretch reads MVRAVVATLLVVLVVASCVSA. Gln-22 carries the pyrrolidone carboxylic acid modification. The residue at position 29 (Trp-29) is a Tryptophan amide. Positions 33–93 are excised as a propeptide; the sequence is AAAGGEGTGM…VQCQDEEYLG (61 aa). Residues 34-56 are disordered; sequence AAGGEGTGMHPPAGAVVPPPSSL.

This sequence belongs to the AKH/HRTH/RPCH family. As to expression, strongly expressed in the eyestalk and weakly in brain. Not expressed in other tissues tested.

It localises to the secreted. Its function is as follows. This hormone adapts the animal to light backgrounds by stimulating concentration of the pigment of its red body-chromatophores. The sequence is that of Red pigment-concentrating hormone from Penaeus monodon (Giant tiger prawn).